The primary structure comprises 500 residues: L-arabinose isomerase (500 aa).

Residues Glu306, Glu333, His350, and His450 each coordinate Mn(2+).

This sequence belongs to the arabinose isomerase family. In terms of assembly, homohexamer. Mn(2+) serves as cofactor.

It carries out the reaction beta-L-arabinopyranose = L-ribulose. It functions in the pathway carbohydrate degradation; L-arabinose degradation via L-ribulose; D-xylulose 5-phosphate from L-arabinose (bacterial route): step 1/3. Functionally, catalyzes the conversion of L-arabinose to L-ribulose. The polypeptide is L-arabinose isomerase (Escherichia coli O6:H1 (strain CFT073 / ATCC 700928 / UPEC)).